A 391-amino-acid chain; its full sequence is Steroid 3-ketoacyl-CoA thiolase (391 aa).

Cysteine 93 (acyl-thioester intermediate) is an active-site residue. CoA contacts are provided by residues glutamine 151, 221–223, and serine 246; that span reads RET. Active-site proton acceptor residues include histidine 347 and cysteine 377. A substrate-binding site is contributed by glycine 379.

Belongs to the thiolase-like superfamily. Thiolase family. Dimer of dimers.

The catalysed reaction is an acyl-CoA + acetyl-CoA = a 3-oxoacyl-CoA + CoA. It carries out the reaction 3-oxochol-4-en-22-oyl-CoA + acetyl-CoA = 3,22-dioxochol-4-en-24-oyl-CoA + CoA. The protein operates within steroid metabolism; cholesterol degradation. Its function is as follows. Involved in the beta-oxidation of the cholesterol side chain. It is important for utilization of cholesterol as a sole carbon source in vitro and for full virulence in the chronic stage of mouse lung infection. Catalyzes the thiolysis of 3,22-dioxochol-4-en-24-oyl-CoA to yield 3-oxo-4-pregnene-20-carboxyl-CoA (3-OPC-CoA) and acetyl-CoA. Also able to use acetoacetyl-CoA (AcAcCoA) as substrate. The chain is Steroid 3-ketoacyl-CoA thiolase (fadA5) from Mycobacterium tuberculosis (strain ATCC 25618 / H37Rv).